The sequence spans 326 residues: Undecaprenyl-diphosphatase (326 aa).

The next 9 helical transmembrane spans lie at 11–31 (AFSLSVAIAVVYHQAWGIAVA), 42–62 (TGVISNGISINLFQAFVLGFI), 90–110 (GVAFTAVIQLGSIGAVFWYFW), 138–158 (LGIGLGTIPIVFFGLLMKLLV), 165–185 (FFRSLSTIAIASIVMALLLAL), 212–232 (ALALIPGVSRSGSTLTAGLFI), 242–262 (FSFLLGIPAITIAGLVELKGL), 272–292 (ILPLIVGTISSAVFSYLAIAW), and 304–324 (IFVWYRLIFGVVILTALGMGF).

This sequence belongs to the UppP family.

Its subcellular location is the cell inner membrane. It catalyses the reaction di-trans,octa-cis-undecaprenyl diphosphate + H2O = di-trans,octa-cis-undecaprenyl phosphate + phosphate + H(+). In terms of biological role, catalyzes the dephosphorylation of undecaprenyl diphosphate (UPP). Confers resistance to bacitracin. This Synechocystis sp. (strain ATCC 27184 / PCC 6803 / Kazusa) protein is Undecaprenyl-diphosphatase.